The following is a 77-amino-acid chain: UPF0401 protein c0279 (77 aa).

The protein belongs to the UPF0401 family.

The polypeptide is UPF0401 protein c0279 (Escherichia coli O6:H1 (strain CFT073 / ATCC 700928 / UPEC)).